The following is a 1063-amino-acid chain: Unconventional myosin-Ic (1063 aa).

Met-1 is modified (N-acetylmethionine). The 685-residue stretch at 47 to 731 folds into the Myosin motor domain; that stretch reads GVQDFVLLEN…TLFATEDALE (685 aa). Residues Asn-88, Tyr-96, 139–148, and 192–196 contribute to the ATP site; these read SGESGAGKTE and NDNSS. Residue Lys-383 is modified to N6-methyllysine. Phosphoserine is present on Ser-408. The residue at position 486 (Lys-486) is an N6-acetyllysine. Residue Ser-536 is modified to Phosphoserine. Residues 608-630 are actin-binding; that stretch reads LLELVEILKSKEPAYVRCIKPND. 2 consecutive IQ domains span residues 734–757 and 758–786; these read RQSL…FLRV and KRSA…AAQT. A phosphoserine mark is found at Ser-864 and Ser-1041. Residues 885 to 1059 form the TH1 domain; that stretch reads KDNYPQSVPR…NGHLAVVAPR (175 aa).

Belongs to the TRAFAC class myosin-kinesin ATPase superfamily. Myosin family. As to quaternary structure, interacts (via its IQ motifs) with CABP1 and CIB1; the interaction with CABP1 and CIB1 is calcium-dependent. Interacts (via tail domain) with PLEKHB1 (via PH domain); the interaction is not affected by the presence or absence of calcium and CALM. Interacts with POLR1A. Interacts with POLR2A. Component of the B-WICH complex, at least composed of SMARCA5/SNF2H, BAZ1B/WSTF, SF3B1, DEK, MYO1C, ERCC6, MYBBP1A and DDX21. Interacts (via its IQ motifs) with CALM; this precludes interaction with YWHAB. Interacts with YWHAB; this precludes interaction with CALM. Interacts with RPS6. Interacts with actin. Interacts with LLPH. Interacts with GLUT4. Interacts (via its IQ motifs) with SH3BGRL3; the interaction is dependent on calcium and takes place at membrane ruffles. Isoform 2 contains a N-acetylmethionine at position 1. In terms of tissue distribution, widely expressed.

Its subcellular location is the cytoplasm. It is found in the nucleus. The protein localises to the cell cortex. It localises to the cell projection. The protein resides in the ruffle membrane. Its subcellular location is the cytoplasmic vesicle. It is found in the stereocilium membrane. The protein localises to the nucleolus. It localises to the nucleoplasm. In terms of biological role, myosins are actin-based motor molecules with ATPase activity. Unconventional myosins serve in intracellular movements. Their highly divergent tails are presumed to bind to membranous compartments, which would be moved relative to actin filaments. Involved in glucose transporter recycling in response to insulin by regulating movement of intracellular GLUT4-containing vesicles to the plasma membrane. Component of the hair cell's (the sensory cells of the inner ear) adaptation-motor complex. Acts as a mediator of adaptation of mechanoelectrical transduction in stereocilia of vestibular hair cells. Binds phosphoinositides and links the actin cytoskeleton to cellular membranes. Functionally, isoform 3 is involved in regulation of transcription. Associated with transcriptional active ribosomal genes. Appears to cooperate with the WICH chromatin-remodeling complex to facilitate transcription. Necessary for the formation of the first phosphodiester bond during transcription initiation. This is Unconventional myosin-Ic (MYO1C) from Bos taurus (Bovine).